Reading from the N-terminus, the 838-residue chain is E3 ubiquitin-protein ligase RNF19A (838 aa).

Residues 128–351 (DFIECPLCLL…LSPSGCTFWG (224 aa)) are TRIAD supradomain. The Zn(2+) site is built by cysteine 132, cysteine 135, cysteine 150, histidine 152, cysteine 155, cysteine 158, cysteine 176, cysteine 179, cysteine 219, cysteine 224, cysteine 241, cysteine 246, cysteine 251, cysteine 254, histidine 259, cysteine 264, cysteine 301, and cysteine 304. Residues 132-179 (CPLCLLRHSKDRFPEIMTCHHRSCVDCLRQYLRIEISESRVNISCPEC) form an RING-type 1 zinc finger. Residues 199-264 (EKYEEFMLRR…KQIWHPNQTC (66 aa)) form an IBR-type zinc finger. An RING-type 2; atypical zinc finger spans residues 301-332 (CPRCAAYIIKMNDGSCNHMTCAVCGCEFCWLC). Cysteine 316 is a catalytic residue. Residues cysteine 321, cysteine 324, cysteine 329, cysteine 332, histidine 340, and cysteine 347 each coordinate Zn(2+). Helical transmembrane passes span 368–388 (LVGAPVGIALIAGIAIPAMII) and 424–444 (VIVSPVVAAVTVGIGVPIMLA). Disordered stretches follow at residues 622–685 (SKPS…SNMK) and 700–721 (QQSTNSSEFEAPSLSDSMPSVA). Serine 631 is subject to Phosphoserine. Residues 631 to 644 (SGSSSVDDGSAARS) are compositionally biased toward low complexity. An interaction with CASR region spans residues 660 to 838 (ATKWSKEATA…ELKVAIQTDI (179 aa)). The span at 671–683 (KKSKSGKLRKKSN) shows a compositional bias: basic residues. Positions 700–717 (QQSTNSSEFEAPSLSDSM) are enriched in polar residues.

The protein belongs to the RBR family. RNF19 subfamily. Interacts with UBE2L3 and UBE2L6. Also interacts with transcription factor Sp1. Interacts with SNCAIP, CASR and VCP.

It is found in the membrane. The protein resides in the cytoplasm. It localises to the cytoskeleton. Its subcellular location is the microtubule organizing center. The protein localises to the centrosome. It carries out the reaction [E2 ubiquitin-conjugating enzyme]-S-ubiquitinyl-L-cysteine + [acceptor protein]-L-lysine = [E2 ubiquitin-conjugating enzyme]-L-cysteine + [acceptor protein]-N(6)-ubiquitinyl-L-lysine.. Its pathway is protein modification; protein ubiquitination. Functionally, E3 ubiquitin-protein ligase which accepts ubiquitin from E2 ubiquitin-conjugating enzymes UBE2L3 and UBE2L6 in the form of a thioester and then directly transfers the ubiquitin to targeted substrates, such as SNCAIP or CASR. The polypeptide is E3 ubiquitin-protein ligase RNF19A (RNF19A) (Sus scrofa (Pig)).